The sequence spans 621 residues: tRNA uridine 5-carboxymethylaminomethyl modification enzyme MnmG (621 aa).

8 to 13 (GAGHAG) provides a ligand contact to FAD. Residue 269–283 (GPRYCPSIEDKIHRF) participates in NAD(+) binding.

The protein belongs to the MnmG family. Homodimer. Heterotetramer of two MnmE and two MnmG subunits. FAD serves as cofactor.

The protein resides in the cytoplasm. Functionally, NAD-binding protein involved in the addition of a carboxymethylaminomethyl (cmnm) group at the wobble position (U34) of certain tRNAs, forming tRNA-cmnm(5)s(2)U34. The chain is tRNA uridine 5-carboxymethylaminomethyl modification enzyme MnmG from Chlorobium phaeovibrioides (strain DSM 265 / 1930) (Prosthecochloris vibrioformis (strain DSM 265)).